The following is a 547-amino-acid chain: Chaperonin GroEL (547 aa).

Residues 30-33, K51, 87-91, G415, 479-481, and D495 contribute to the ATP site; these read TLGP, DGTTT, and NAA.

It belongs to the chaperonin (HSP60) family. As to quaternary structure, forms a cylinder of 14 subunits composed of two heptameric rings stacked back-to-back. Interacts with the co-chaperonin GroES.

Its subcellular location is the cytoplasm. It carries out the reaction ATP + H2O + a folded polypeptide = ADP + phosphate + an unfolded polypeptide.. Together with its co-chaperonin GroES, plays an essential role in assisting protein folding. The GroEL-GroES system forms a nano-cage that allows encapsulation of the non-native substrate proteins and provides a physical environment optimized to promote and accelerate protein folding. This Acinetobacter baumannii (strain ACICU) protein is Chaperonin GroEL.